A 256-amino-acid polypeptide reads, in one-letter code: Tetraspanin-32 (256 aa).

A run of 4 helical transmembrane segments spans residues 15 to 35 (LITN…VVVI), 61 to 81 (AFYV…LSTI), 90 to 110 (LMAA…QVAF), and 203 to 223 (CTSL…WFAI).

It belongs to the tetraspanin (TM4SF) family. Expressed exclusively in hematopoietic tissues. Expression detected in spleen, thymus, bone marrow and peripheral blood leukocytes but not in heart, brain, lung, liver, kidney or testis.

It is found in the membrane. The protein is Tetraspanin-32 (Tspan32) of Mus musculus (Mouse).